Here is a 438-residue protein sequence, read N- to C-terminus: sn-glycerol-3-phosphate-binding periplasmic protein UgpB (438 aa).

The N-terminal stretch at 1–23 (MKPLRYTASALALGLALMANAQA) is a signal peptide. The sn-glycerol 3-phosphate site is built by tyrosine 65, glutamate 89, serine 144, serine 270, glycine 307, tyrosine 346, and arginine 397.

This sequence belongs to the bacterial solute-binding protein 1 family. The complex is composed of two ATP-binding proteins (UgpC), two transmembrane proteins (UgpA and UgpE) and a solute-binding protein (UgpB).

The protein resides in the periplasm. In terms of biological role, part of the ABC transporter complex UgpBAEC involved in sn-glycerol-3-phosphate (G3P) import. Binds G3P. The polypeptide is sn-glycerol-3-phosphate-binding periplasmic protein UgpB (ugpB) (Escherichia coli O6:K15:H31 (strain 536 / UPEC)).